We begin with the raw amino-acid sequence, 454 residues long: Protein phosphatase methylesterase 1 (454 aa).

2 disordered regions span residues 1-69 (MSEL…TGTV) and 181-203 (TTVT…APPP). Residues 44 to 69 (AGPSPGGFPFDDDSSSASSVSSTGTV) show a composition bias toward low complexity. Residues Ser240, Asp266, and His412 contribute to the active site.

Belongs to the AB hydrolase superfamily.

The catalysed reaction is [phosphatase 2A protein]-C-terminal L-leucine methyl ester + H2O = [phosphatase 2A protein]-C-terminal L-leucine + methanol + H(+). Functionally, demethylates proteins that have been reversibly carboxymethylated. Demethylates the phosphatase PP2A catalytic subunit. The sequence is that of Protein phosphatase methylesterase 1 (pme-1) from Neurospora crassa (strain ATCC 24698 / 74-OR23-1A / CBS 708.71 / DSM 1257 / FGSC 987).